The chain runs to 174 residues: Fimbria A protein (174 aa).

Residues methionine 1 to alanine 22 form the signal peptide. The cysteines at positions 41 and 80 are disulfide-linked.

This sequence belongs to the fimbrial protein family.

It localises to the fimbrium. Its function is as follows. Major structural component of mannose-resistant fimbriae of Serratia marcescens. The polypeptide is Fimbria A protein (smfA) (Serratia marcescens).